The chain runs to 282 residues: Homeobox protein CDX-4 (282 aa).

Disordered stretches follow at residues 13-36 (MYPG…GGSG) and 98-156 (MNDM…SPYA). The span at 20-29 (SPGGSSTAGV) shows a compositional bias: low complexity. 2 stretches are compositionally biased toward polar residues: residues 110 to 124 (DYST…SNGG) and 133 to 148 (SLVS…TSPS). The homeobox DNA-binding region spans 171-230 (KEKYRVVYTDHQRLELEKEFHCNRYITIRRKSELAVNLGLSERQVKIWFQNRRAKERKMI).

Belongs to the Caudal homeobox family.

Its subcellular location is the nucleus. This chain is Homeobox protein CDX-4 (Cdx4), found in Mus musculus (Mouse).